Consider the following 465-residue polypeptide: Argininosuccinate lyase (465 aa).

The protein belongs to the lyase 1 family. Argininosuccinate lyase subfamily.

It localises to the cytoplasm. The catalysed reaction is 2-(N(omega)-L-arginino)succinate = fumarate + L-arginine. It functions in the pathway amino-acid biosynthesis; L-arginine biosynthesis; L-arginine from L-ornithine and carbamoyl phosphate: step 3/3. This chain is Argininosuccinate lyase, found in Desulfatibacillum aliphaticivorans.